We begin with the raw amino-acid sequence, 92 residues long: Small ribosomal subunit protein uS19 (92 aa).

It belongs to the universal ribosomal protein uS19 family.

In terms of biological role, protein S19 forms a complex with S13 that binds strongly to the 16S ribosomal RNA. The protein is Small ribosomal subunit protein uS19 of Lysinibacillus sphaericus (strain C3-41).